The primary structure comprises 483 residues: Betaine aldehyde dehydrogenase (483 aa).

2 residues coordinate K(+): isoleucine 27 and aspartate 93. Residue 149–151 (GAW) participates in NAD(+) binding. Lysine 161 (charge relay system) is an active-site residue. 175 to 178 (KPSE) contacts NAD(+). K(+) is bound at residue valine 179. An NAD(+)-binding site is contributed by 228 to 231 (SVPT). Residue valine 243 coordinates K(+). The active-site Proton acceptor is glutamate 249. 3 residues coordinate NAD(+): glycine 251, cysteine 283, and glutamate 380. The active-site Nucleophile is the cysteine 283. Residue cysteine 283 is modified to Cysteine sulfenic acid (-SOH). The K(+) site is built by lysine 450 and glycine 453. Catalysis depends on glutamate 457, which acts as the Charge relay system.

This sequence belongs to the aldehyde dehydrogenase family. In terms of assembly, dimer of dimers. Requires K(+) as cofactor.

The enzyme catalyses betaine aldehyde + NAD(+) + H2O = glycine betaine + NADH + 2 H(+). It functions in the pathway amine and polyamine biosynthesis; betaine biosynthesis via choline pathway; betaine from betaine aldehyde: step 1/1. In terms of biological role, involved in the biosynthesis of the osmoprotectant glycine betaine. Catalyzes the irreversible oxidation of betaine aldehyde to the corresponding acid. The chain is Betaine aldehyde dehydrogenase from Cereibacter sphaeroides (strain KD131 / KCTC 12085) (Rhodobacter sphaeroides).